A 256-amino-acid chain; its full sequence is 14-3-3-like protein GF14-C (256 aa).

Belongs to the 14-3-3 family. As to quaternary structure, may form a complex with the transcriptional activator VP1 and the bZIP transcription factor EMBP1. Expressed in seedlings, internodes and panicles.

It is found in the cytoplasm. The protein resides in the nucleus. Is associated with a DNA binding complex that binds to the G box, a well-characterized cis-acting DNA regulatory element found in plant genes. The sequence is that of 14-3-3-like protein GF14-C (GF14C) from Oryza sativa subsp. japonica (Rice).